We begin with the raw amino-acid sequence, 1370 residues long: MPYSYTEKKRIRKSFAKREDVQNVPFLLATQLQSYLTFLQADTATSDRVNEGLQAAFSSIFPIVSHNGMARLEFVSYALGEPVFDVKECQQRGLTYASPLRAKVRLVLLDREVSKPTIKEVKEQEVYMGEIPLMTGTGSFVINGTERVIVSQLHRSPGVFFEHDRGKTHSSGKLLFSARVIPYRGSWLDFEFDPKDVLFFRVDRRRKMPVTILLKAIGMTPESILAHFFDFDNFELKSEGGMMEFVAERWKGEMARFDIADRDGKVIVEKDKRINAKHLRDLAAGGIQRVSVPEDFLYGRVLAKNIVDPDTGEVVAHANDEITESVLNAMRAANVRDIQTLYTNDLDRGPYISQTLRADETADQMAARVAIYRMMRPGEPPAEEAVEALFQRLFYSEETYDLSRVGRMKVNSRLGRGDDSTGPMTLTNEDILETIKVLVELRNGRGQIDDIDHLGNRRVRCVGELAENQFRAGLVRVERAVKERLGQAETENLMPHDLINSKPISAAIKEFFGSSQLSQFMDQTNPLSEITHKRRVSALGPGGLTRERAGFEVRDVHPTHYGRVCPIETPEGPNIGLINSMALYARLNEYGFLETPYRKIIDGKVSDQIDYLSAIEESHYVIAQANAALDDEGRFVDDLVACREAGETMLTAPGNVHYMDVAPSQIVSVAASLIPFLEHDDANRALMGANMQRQAVPCLRPEKPLVGTGVERTVAVDSGTTVQALRGGVVDHVDADRVVIRVNDEENVAGEVGVDIYNLIKYTRSNQNTNINQRPIVARGDKVAKGDVLADGASTDLGELALGQNMLIAFMPWNGYNFEDSILISERVVADDRYTSIHIEELTVVARDTKLGPEEITRDISNLAETQLNRLDDSGIVYIGAEVSADDVLVGKVTPKGETQLTPEEKLLRAIFGEKASDVKDTSLRVSSGMTGTVIDVQVFTREGIVRDKRAQSIIDDELRRYRQDLNDQLRIVENDQFDRIEKMLVGKAVNGGPRKLAKGATLTKAYLADLDRWQWFDIRLADEQHAVVLEQAKESLEQKRHQFDLAFEEKRKKLTQGDELPPGVLKMIKVYLAVKRRLQPGDKMAGRHGNKGVVSRITPVEDMPHMADGTPADIVLNPLGVPSRMNVGQVLEVHLGWAAKGVGYRIADMLRDERTAQAKSVRGYLEKVYNTTGSSAHIDSLTDEEVLELANNLKKGVPFATPVFDGATEEEIGKMLELAYPDDVAARMRLTASRSQAWLYDGRTGEQFERPVTIGYMHYLKLHHLVDDKMHARSTGPYSLVTQQPLGGKAQFGGQRFGEMEVWALEAYGASYTLQEMLTVKSDDITGRTKVYENIVKGDHVIDAGMPESFNVLVKEIRSLALDMDLERN.

Belongs to the RNA polymerase beta chain family. In terms of assembly, the RNAP catalytic core consists of 2 alpha, 1 beta, 1 beta' and 1 omega subunit. When a sigma factor is associated with the core the holoenzyme is formed, which can initiate transcription.

The enzyme catalyses RNA(n) + a ribonucleoside 5'-triphosphate = RNA(n+1) + diphosphate. Functionally, DNA-dependent RNA polymerase catalyzes the transcription of DNA into RNA using the four ribonucleoside triphosphates as substrates. In Bordetella parapertussis (strain 12822 / ATCC BAA-587 / NCTC 13253), this protein is DNA-directed RNA polymerase subunit beta.